The following is an 83-amino-acid chain: Cell division topological specificity factor (83 aa).

It belongs to the MinE family.

Its function is as follows. Prevents the cell division inhibition by proteins MinC and MinD at internal division sites while permitting inhibition at polar sites. This ensures cell division at the proper site by restricting the formation of a division septum at the midpoint of the long axis of the cell. The protein is Cell division topological specificity factor of Marinobacter nauticus (strain ATCC 700491 / DSM 11845 / VT8) (Marinobacter aquaeolei).